A 390-amino-acid chain; its full sequence is MRYITAGESHGPQLTVILEGVPAGLTLAAEHINKELLRRQKGHGRGRRMQIETDTVEIVSGVRHGVTLGSPITLIVKNDDFKHWTKVMGAEPISEKESKDMKRTITKPRPGHADLNGAIKYGHRDIRNVLERSSARETTVRVAAGAVAKQILKELGVEIAGHVLEIGGVKAKHISNLSIEEIQTITENSPVRCLDKEVEQEMMNAIDHAKSSGDSIGGIVEVIAEGMPIGVGSYVHYDRKLDAKLAGAIMSINAFKGAEIGVGFEAARQPGSKVHDEILWDEEQGYTRKTNNAGGLEGGMTTGMPIVVRGVMKPIPTLYKPLASVDIDTKEAFQASIERSDSCAVPAAGVVAESVVAWELAHALVEQFGKDRMELIQQNITQHNKYAKEF.

NADP(+) is bound by residues R39 and R45. Residues 132–134 (RSS), 253–254 (NA), G298, 313–317 (KPIPT), and R339 contribute to the FMN site.

The protein belongs to the chorismate synthase family. As to quaternary structure, homotetramer. FMNH2 is required as a cofactor.

The enzyme catalyses 5-O-(1-carboxyvinyl)-3-phosphoshikimate = chorismate + phosphate. It functions in the pathway metabolic intermediate biosynthesis; chorismate biosynthesis; chorismate from D-erythrose 4-phosphate and phosphoenolpyruvate: step 7/7. Catalyzes the anti-1,4-elimination of the C-3 phosphate and the C-6 proR hydrogen from 5-enolpyruvylshikimate-3-phosphate (EPSP) to yield chorismate, which is the branch point compound that serves as the starting substrate for the three terminal pathways of aromatic amino acid biosynthesis. This reaction introduces a second double bond into the aromatic ring system. This chain is Chorismate synthase 2, found in Bacillus cereus (strain ATCC 10987 / NRS 248).